We begin with the raw amino-acid sequence, 138 residues long: Putative pre-16S rRNA nuclease (138 aa).

Belongs to the YqgF nuclease family.

The protein localises to the cytoplasm. Functionally, could be a nuclease involved in processing of the 5'-end of pre-16S rRNA. The sequence is that of Putative pre-16S rRNA nuclease from Porphyromonas gingivalis (strain ATCC BAA-308 / W83).